We begin with the raw amino-acid sequence, 526 residues long: Na(+)/H(+) antiporter NhaB (526 aa).

A run of 12 helical transmembrane segments spans residues 25-45 (ILLF…AAGW), 52-72 (IFTL…LLAI), 89-109 (LVAN…IYFM), 130-164 (LSLA…FYAI), 204-224 (LMMH…VGEP), 242-262 (IRMA…CILV), 305-325 (AVIA…VGLI), 350-370 (QEAL…AVII), 391-411 (LALF…VFVG), 448-468 (VATP…LAPL), 479-499 (MALP…ELLL), and 505-525 (WFYQ…LPAL).

It belongs to the NhaB Na(+)/H(+) (TC 2.A.34) antiporter family.

It is found in the cell inner membrane. The catalysed reaction is 2 Na(+)(in) + 3 H(+)(out) = 2 Na(+)(out) + 3 H(+)(in). Functionally, na(+)/H(+) antiporter that extrudes sodium in exchange for external protons. The chain is Na(+)/H(+) antiporter NhaB from Aeromonas salmonicida (strain A449).